The sequence spans 261 residues: Enolase-phosphatase E1 (261 aa).

2 residues coordinate Mg(2+): D16 and E18. Substrate-binding positions include 150–151 (SS) and K184. D209 is a binding site for Mg(2+).

Belongs to the HAD-like hydrolase superfamily. MasA/MtnC family. Monomer. Mg(2+) is required as a cofactor.

The protein localises to the cytoplasm. The protein resides in the nucleus. The catalysed reaction is 5-methylsulfanyl-2,3-dioxopentyl phosphate + H2O = 1,2-dihydroxy-5-(methylsulfanyl)pent-1-en-3-one + phosphate. Its pathway is amino-acid biosynthesis; L-methionine biosynthesis via salvage pathway; L-methionine from S-methyl-5-thio-alpha-D-ribose 1-phosphate: step 3/6. It participates in amino-acid biosynthesis; L-methionine biosynthesis via salvage pathway; L-methionine from S-methyl-5-thio-alpha-D-ribose 1-phosphate: step 4/6. In terms of biological role, bifunctional enzyme that catalyzes the enolization of 2,3-diketo-5-methylthiopentyl-1-phosphate (DK-MTP-1-P) into the intermediate 2-hydroxy-3-keto-5-methylthiopentenyl-1-phosphate (HK-MTPenyl-1-P), which is then dephosphorylated to form the acireductone 1,2-dihydroxy-3-keto-5-methylthiopentene (DHK-MTPene). The sequence is that of Enolase-phosphatase E1 (Enoph1) from Rattus norvegicus (Rat).